Reading from the N-terminus, the 246-residue chain is uncharacterized protein (246 aa).

This is an uncharacterized protein from Dictyostelium discoideum (Social amoeba).